Here is a 527-residue protein sequence, read N- to C-terminus: Protein SDS24 (527 aa).

Composition is skewed to low complexity over residues 1–22 (MAST…LPTS) and 55–74 (TPPT…TPAP). The interval 1 to 75 (MASTSNTFPP…PGCAATPAPL (75 aa)) is disordered. Ser-94 is subject to Phosphoserine. CBS domains are found at residues 114 to 175 (IEQN…KITV), 198 to 256 (LTPK…NARS), 283 to 342 (TSRQ…QYPL), and 443 to 512 (LNSH…GNKE). Over residues 424–447 (AQSSANGATPMSKSSSSTSLNSHS) the composition is skewed to low complexity. Disordered stretches follow at residues 424–478 (AQSS…TNTP) and 508–527 (TGNK…SIAM). Ser-458 and Ser-524 each carry phosphoserine.

This sequence belongs to the SDS23 family.

Its subcellular location is the cytoplasm. The protein localises to the nucleus. Its function is as follows. Involved in DNA replication and cell separation during budding. This chain is Protein SDS24 (SDS24), found in Saccharomyces cerevisiae (strain YJM789) (Baker's yeast).